Reading from the N-terminus, the 160-residue chain is Small ribosomal subunit protein bS6 (160 aa).

Composition is skewed to basic and acidic residues over residues 94-119 (EEHE…RGGR) and 125-152 (RGDR…REDA). The interval 94–160 (EEHEEGPSAM…DADTAAASEE (67 aa)) is disordered.

It belongs to the bacterial ribosomal protein bS6 family.

Binds together with bS18 to 16S ribosomal RNA. The polypeptide is Small ribosomal subunit protein bS6 (Rhodopseudomonas palustris (strain BisB5)).